The following is a 66-amino-acid chain: Gas vesicle protein A (66 aa).

Belongs to the gas vesicle GvpA family. As to quaternary structure, the gas vesicle shell is 2 nm thick and consists of a single layer of this protein. It forms helical ribs nearly perpendicular to the long axis of the vesicle.

It is found in the gas vesicle shell. Its function is as follows. Gas vesicles are hollow, gas filled proteinaceous nanostructures found in some microorganisms. During planktonic growth they allow positioning of the organism at a favorable depth for light or nutrient acquisition. GvpA forms the protein shell. The protein is Gas vesicle protein A of Thiocapsa pendens (Amoebobacter pendens).